The following is an 816-amino-acid chain: Sodium/hydrogen exchanger 1 (816 aa).

Residues 1-98 (MLLWSAVRGL…FPVLGIDYTH (98 aa)) are Extracellular-facing. Polar residues predominate over residues 37–50 (LQLSPTDSTTPDSQ). The segment at 37–79 (LQLSPTDSTTPDSQPSRERSIGDVTTAPPEVTPESRPVNRSVT) is disordered. N75 carries an N-linked (GlcNAc...) asparagine glycan. The chain crosses the membrane as a helical span at residues 99-121 (VRTPFEISLWILLACLMKIGFHV). At 122-130 (IPTISSIVP) the chain is on the cytoplasmic side. The helical transmembrane segment at 131-148 (ESCLLIVVGLLVGGLIKG) threads the bilayer. Topologically, residues 149-158 (VGEKPPFLQS) are extracellular. Residues 159–176 (EVFFLFLLPPIILDAGYF) traverse the membrane as a helical segment. Residues 177–186 (LPLRQFTENL) are Cytoplasmic-facing. The helical transmembrane segment at 187–215 (GTILIFAVVGTLWNAFFLGGLMYAVCLVG) threads the bilayer. Topologically, residues 216 to 222 (GEQINNI) are extracellular. The helical transmembrane segment at 223 to 249 (GLLDNLLFGSIISAVDPVAVLAVFEEI) threads the bilayer. The Cytoplasmic portion of the chain corresponds to 250-252 (HIN). The helical transmembrane segment at 253 to 283 (ELLHILVFGESLLNDAVTVVLYHLFEEFANY) threads the bilayer. Over 284–287 (DHVG) the chain is Extracellular. A helical transmembrane segment spans residues 288–322 (IVDIVLGFLSFFVVALGGVFVGVVYGVIAAFTSRF). Residues 323-328 (TAHIRV) are Cytoplasmic-facing. A helical transmembrane segment spans residues 329-341 (IEPLFVFLYSYMA). Residues 342–350 (YLSAELFHL) are Extracellular-facing. The helical transmembrane segment at 351–371 (SGIMALIASGVVMRPYVEANI) threads the bilayer. At 372–373 (SH) the chain is on the cytoplasmic side. Residues 374-404 (KSHTTIKYFLKMWSSVSETLIFIFLGVSTVA) traverse the membrane as a helical segment. Over 405 to 410 (GSHHWN) the chain is Extracellular. The helical transmembrane segment at 411–438 (WTFVISTLLFCLIARVLGVLGLTWFINK) threads the bilayer. Topologically, residues 439–444 (FRIVKL) are cytoplasmic. The chain crosses the membrane as a helical span at residues 445–469 (TPKDQFIIAYGGLRGAIAFSLGYLL). The Extracellular segment spans residues 470 to 475 (DKKHFP). Residues 476-505 (MCDLFLTAIITVIFFTVFVQGMTIRPLVDL) form a helical membrane-spanning segment. The tract at residues 503–545 (VDLLAVKKKQETKRSINEEIHTQFLDHLLTGIEDICGHYGHHH) is interaction with TESC. Residues 506–816 (LAVKKKQETK…EGEPFIPKGQ (311 aa)) lie on the Cytoplasmic side of the membrane. The interval 509-516 (KKKQETKR) is PI(4,5)P2-binding region. Residues 515-545 (KRSINEEIHTQFLDHLLTGIEDICGHYGHHH) form an interaction with CHP2 region. The confers pH-dependent PI(4,5)P2 binding stretch occupies residues 540–545 (HYGHHH). The tract at residues 552-560 (RFNKKYVKK) is PI(4,5)P2-binding region. 2 positions are modified to phosphoserine: S599 and S602. The residue at position 603 (T603) is a Phosphothreonine. S605 and S648 each carry phosphoserine. The interaction with TESC stretch occupies residues 633 to 816 (KILRNNLQKT…EGEPFIPKGQ (184 aa)). Residues 633-816 (KILRNNLQKT…EGEPFIPKGQ (184 aa)) are interaction with CALM1. The tract at residues 684–687 (LTVP) is interaction with PPP3CA. S693, S697, and S703 each carry phosphoserine. The segment at 715-720 (PVITID) is interaction with PPP3CA. A phosphoserine mark is found at S723, S726, S729, S786, S788, and S797. The segment at 748-816 (PRVAEEAAEE…EGEPFIPKGQ (69 aa)) is disordered. Positions 783-792 (PSDSPSSQRM) are enriched in polar residues.

Belongs to the monovalent cation:proton antiporter 1 (CPA1) transporter (TC 2.A.36) family. Homodimer; dimerization is crucial for its function. Oligomer. Interacts with CALM in a calcium-dependent manner. Interacts with TESC. Interacts (via the juxtamembrane region of the cytoplasmic C-terminal domain) with CHP1; the interaction occurs at the plasma membrane in a calcium-dependent manner. Interacts with CHP2; the interaction occurs in a calcium-dependent manner. Interacts with EZR; regulates the cytoskeletal interactions of SLC9A1 and promotes stress fiber formation. Ubiquitinated, leading to its degradation by the proteasome. Ubiquitination is reduced by CHP1. In terms of processing, O-glycosylated. Post-translationally, palmitoylated; may play a major role in SLC9A1 regulation. Phosphorylation at Ser-648 by AKT1 reduces SLC9A1 binding to CALM1. In terms of tissue distribution, kidney and intestine.

It localises to the cell membrane. Its subcellular location is the basolateral cell membrane. The catalysed reaction is Na(+)(in) + H(+)(out) = Na(+)(out) + H(+)(in). It carries out the reaction Li(+)(out) + H(+)(in) = Li(+)(in) + H(+)(out). The enzyme catalyses Li(+)(in) + Na(+)(out) = Li(+)(out) + Na(+)(in). Activated at acidic pHs. Inhibited by cariporide and eniporide. Phosphatidylinositol 4,5-bisphosphate (PI(4,5)P2) and phosphatidylinositol 3,4,5-trisphosphate (PI(3,4,5)P3) bind and differentially regulate SLC9A1 activity. In terms of biological role, electroneutral Na(+) /H(+) antiporter that extrudes Na(+) in exchange for external protons driven by the inward sodium ion chemical gradient, protecting cells from acidification that occurs from metabolism. Exchanges intracellular H(+) ions for extracellular Na(+) in 1:1 stoichiometry. Plays a key role in maintening intracellular pH neutral and cell volume, and thus is important for cell growth, proliferation, migration and survival. In addition, can transport lithium Li(+) and functions also as a Na(+)/Li(+) antiporter. SLC9A1 also functions in membrane anchoring and organization of scaffolding complexes that coordinate signaling inputs. The sequence is that of Sodium/hydrogen exchanger 1 (SLC9A1) from Oryctolagus cuniculus (Rabbit).